Here is a 360-residue protein sequence, read N- to C-terminus: Protein phosphatase 1L (360 aa).

Residues 1–25 are Extracellular-facing; that stretch reads MIEDTMTLLSLLGRIMRYFLLRPET. Residues 26 to 42 form a helical membrane-spanning segment; it reads LFLLCISLALWSYFFHT. At 43 to 360 the chain is on the cytoplasmic side; the sequence is DEVKTIVKSS…FRNSSKTEEQ (318 aa). The PPM-type phosphatase domain occupies 92–351; it reads NVAVYSIQGR…DNITVMVVKF (260 aa). 4 residues coordinate Mn(2+): D128, G129, D302, and D342.

Belongs to the PP2C family. As to quaternary structure, interacts with MAP3K7/TAK1 and MAP3K5. The cofactor is Mg(2+). Mn(2+) serves as cofactor.

Its subcellular location is the membrane. It carries out the reaction O-phospho-L-seryl-[protein] + H2O = L-seryl-[protein] + phosphate. The enzyme catalyses O-phospho-L-threonyl-[protein] + H2O = L-threonyl-[protein] + phosphate. Its function is as follows. Acts as a suppressor of the SAPK signaling pathways by associating with and dephosphorylating MAP3K7/TAK1 and MAP3K5, and by attenuating the association between MAP3K7/TAK1 and MAP2K4 or MAP2K6. This chain is Protein phosphatase 1L (PPM1L), found in Bos taurus (Bovine).